A 104-amino-acid chain; its full sequence is Replication restart protein PriB (104 aa).

Positions 1 to 101 constitute an SSB domain; that stretch reads MTNRLVLSGT…LHAEQIDLID (101 aa).

Belongs to the PriB family. As to quaternary structure, homodimer. Interacts with PriA and DnaT. Component of the replication restart primosome. Primosome assembly occurs via a 'hand-off' mechanism. PriA binds to replication forks, subsequently PriB then DnaT bind; DnaT then displaces ssDNA to generate the helicase loading substrate.

Functionally, involved in the restart of stalled replication forks, which reloads the replicative helicase on sites other than the origin of replication; the PriA-PriB pathway is the major replication restart pathway. During primosome assembly it facilitates complex formation between PriA and DnaT on DNA; stabilizes PriA on DNA. Stimulates the DNA unwinding activity of PriA helicase. The protein is Replication restart protein PriB of Enterobacter sp. (strain 638).